We begin with the raw amino-acid sequence, 161 residues long: Glycine/sarcosine/betaine reductase complex component A2 (161 aa).

Residue Sec42 is part of the active site. A non-standard amino acid (selenocysteine) is located at residue Sec42.

The protein belongs to the GrdA family. Monomer. Component of the glycine, sarcosine and betaine reductase complexes, together with components B and C.

It carries out the reaction acetyl phosphate + [thioredoxin]-disulfide + NH4(+) + H2O = [thioredoxin]-dithiol + glycine + phosphate + H(+). The catalysed reaction is acetyl phosphate + methylamine + [thioredoxin]-disulfide + H2O = sarcosine + [thioredoxin]-dithiol + phosphate + H(+). The enzyme catalyses acetyl phosphate + trimethylamine + [thioredoxin]-disulfide + H2O = glycine betaine + [thioredoxin]-dithiol + phosphate + H(+). In the first step of glycine, betaine and sarcosine reductases, the substrate is bound to component PB via a Schiff base intermediate. Then the PB-activated substrate is nucleophilically attacked by the selenol anion of component PA to transform it to a carboxymethylated selenoether and the respective amine. By action of component PC, acetyl phosphate is formed, leaving component PA in its oxidized state. Finally component PA becomes reduced by the thioredoxin system to start a new catalytic cycle of reductive deamination. The chain is Glycine/sarcosine/betaine reductase complex component A2 (grdA2) from Photobacterium profundum (strain SS9).